Consider the following 552-residue polypeptide: uncharacterized protein (552 aa).

The region spanning 8–200 is the DhaL domain; sequence KLFADMIIQG…LLCVYEGFLK (193 aa).

This is an uncharacterized protein from Staphylococcus epidermidis (strain ATCC 12228 / FDA PCI 1200).